The primary structure comprises 664 residues: Sorbicillinoid biosynthetic cluster transcription factor sor3 (664 aa).

The zn(2)-C6 fungal-type DNA-binding region spans 40–67 (CQSCRASKVKCDGGRPVCARCQKRGRAC). The disordered stretch occupies residues 68–102 (SYSQHDAASPRGRGRQRAKAPTRQPRPIRSRASVE).

It localises to the nucleus. Functionally, transcription factor that acts in concert with sor4 which is a transcriptional activator of the gene cluster that mediates the biosynthesis of sorbicillinoids, a diverse group of yellow secondary metabolites that restrict growth of competing pathogenic fungi but not of bacteria. Regulates the cluster genes in a light dependent manner. Also plays a direct or indirect role in regulation of paracelsin biosynthesis and cellulase gene expression. This is Sorbicillinoid biosynthetic cluster transcription factor sor3 from Hypocrea jecorina (strain QM6a) (Trichoderma reesei).